A 142-amino-acid polypeptide reads, in one-letter code: Ribosome-binding factor A (142 aa).

Residues 118 to 142 (DEAKQQEHGTVENAKQDGDKAEDDK) form a disordered region.

This sequence belongs to the RbfA family. As to quaternary structure, monomer. Binds 30S ribosomal subunits, but not 50S ribosomal subunits or 70S ribosomes.

It is found in the cytoplasm. In terms of biological role, one of several proteins that assist in the late maturation steps of the functional core of the 30S ribosomal subunit. Associates with free 30S ribosomal subunits (but not with 30S subunits that are part of 70S ribosomes or polysomes). Required for efficient processing of 16S rRNA. May interact with the 5'-terminal helix region of 16S rRNA. In Shewanella piezotolerans (strain WP3 / JCM 13877), this protein is Ribosome-binding factor A.